We begin with the raw amino-acid sequence, 69 residues long: Large ribosomal subunit protein bL31 (69 aa).

The Zn(2+) site is built by Cys-16, Cys-18, Cys-36, and Cys-39.

Belongs to the bacterial ribosomal protein bL31 family. Type A subfamily. Part of the 50S ribosomal subunit. It depends on Zn(2+) as a cofactor.

Binds the 23S rRNA. In Kosmotoga olearia (strain ATCC BAA-1733 / DSM 21960 / TBF 19.5.1), this protein is Large ribosomal subunit protein bL31.